The following is a 272-amino-acid chain: Homeobox protein Hox-D12 (272 aa).

Positions 204–263 form a DNA-binding region, homeobox; it reads SRRKRKPYTKQQIAELENEFLANEFINRQKRKELSDRLNLSDQQVKIWFQNRRMKKKRLV.

Belongs to the Abd-B homeobox family.

It localises to the nucleus. Sequence-specific transcription factor which is part of a developmental regulatory system that provides cells with specific positional identities on the anterior-posterior axis. The sequence is that of Homeobox protein Hox-D12 (HOXD12) from Heterodontus francisci (Horn shark).